The chain runs to 250 residues: Indole-3-glycerol phosphate synthase (250 aa).

Belongs to the TrpC family.

It carries out the reaction 1-(2-carboxyphenylamino)-1-deoxy-D-ribulose 5-phosphate + H(+) = (1S,2R)-1-C-(indol-3-yl)glycerol 3-phosphate + CO2 + H2O. The protein operates within amino-acid biosynthesis; L-tryptophan biosynthesis; L-tryptophan from chorismate: step 4/5. This chain is Indole-3-glycerol phosphate synthase, found in Bacillus pumilus (strain SAFR-032).